The chain runs to 207 residues: MTARGNLFIVSAPSGAGKSSLISALLQDKPADKQVSVSHTTRQPRPGEVNGQHYHFVTKEEFKALITENAFFEWAEVFGNYYGTSRKVIEQTLTDGIDVFLDIDWQGAQQVKKVMPEAIGIFILPPSRTELEKRLTGRGQDSKEVIASRMAQAASEISHYNEYDFIIINDDFDTALADLVAIIRSQRLTDTGQIHAHNDMIQGLLAD.

The Guanylate kinase-like domain occupies 5–184 (GNLFIVSAPS…ALADLVAIIR (180 aa)). ATP is bound at residue 12-19 (APSGAGKS).

It belongs to the guanylate kinase family.

The protein localises to the cytoplasm. It catalyses the reaction GMP + ATP = GDP + ADP. Essential for recycling GMP and indirectly, cGMP. The sequence is that of Guanylate kinase from Shewanella violacea (strain JCM 10179 / CIP 106290 / LMG 19151 / DSS12).